The sequence spans 2144 residues: Insulin-like receptor (2144 aa).

The signal sequence occupies residues 1–43; the sequence is MFNMPRGVTKSKSKRGKIKMENDMAAAATTTACTLGHICVLCR. A glycan (N-linked (GlcNAc...) asparagine) is linked at Asn74. Residues 174–199 show a composition bias toward basic residues; sequence RRQHQQQHHHHYQHHHQQHHQQHHQR. Positions 174–200 are disordered; that stretch reads RRQHQQQHHHHYQHHHQQHHQQHHQRQ. Residue Asn203 is glycosylated (N-linked (GlcNAc...) asparagine). Residues 229–256 form a disordered region; it reads NYKQQQQLQHNQQLPRATPQQKQQEKDR. Over residues 232 to 242 the composition is skewed to low complexity; the sequence is QQQQLQHNQQL. Residues Asn265, Asn356, Asn376, Asn406, Asn468, and Asn509 are each glycosylated (N-linked (GlcNAc...) asparagine). 8 cysteine pairs are disulfide-bonded: Cys531–Cys539, Cys535–Cys545, Cys546–Cys554, Cys550–Cys564, Cys567–Cys576, Cys580–Cys591, Cys597–Cys618, and Cys635–Cys638. An FU repeat occupies 542–586; it reads EHTCCSQDCLGGCVIDKNGNESCISCRNVSFNNICMDSCPKGYYQ. N-linked (GlcNAc...) asparagine glycans are attached at residues Asn561 and Asn569. Residues Asn751, Asn810, Asn824, Asn839, Asn864, Asn898, Asn946, Asn1053, Asn1147, Asn1218, and Asn1265 are each glycosylated (N-linked (GlcNAc...) asparagine). 2 consecutive Fibronectin type-III domains span residues 825-927 and 928-1026; these read VTTK…TNPG and RPSK…EYDD. Residues 1053-1084 are disordered; the sequence is NGSSDKSDGAEGAALDSNAIPNGGATNPSRRR. The Fibronectin type-III 3 domain occupies 1210 to 1305; that stretch reads LKVDLEHANN…EVEHIKVEPP (96 aa). The chain crosses the membrane as a helical span at residues 1311–1331; sequence VFFWLLGIGLAFLIVSLFGYV. Residues 1332 to 2144 are Cytoplasmic-facing; the sequence is CYLHKRKVPS…PPNGFIGREA (813 aa). Residues 1351–1354 form a chico-binding region; it reads NPFY. At Tyr1354 the chain carries Phosphotyrosine; by autocatalysis. Residues 1371-1659 enclose the Protein kinase domain; the sequence is IIQLAPLGQG…LEPQCPNSQF (289 aa). ATP is bound by residues 1377–1385 and Lys1405; that span reads LGQGSFGMV. The active-site Proton acceptor is Asp1519. Tyr1545, Tyr1549, and Tyr1550 each carry phosphotyrosine; by autocatalysis. 4 disordered regions span residues 1690 to 1724, 1788 to 1871, 1886 to 1962, and 2020 to 2144; these read VPLDQDLQDREQQEDATTPLRMGDYQQNSSLDQPP, RGYE…KKTV, LFNH…ISDN, and ISHN…GREA. Ser1816 bears the Phosphoserine mark. Low complexity-rich tracts occupy residues 1849–1860 and 1894–1916; these read STASAGSSNASS and SNASHKSNASNAPSTSSNTNLTS. Residues 2042–2062 show a composition bias toward acidic residues; sequence SDEDNEQEEDDEDEDDDVDDE. Positions 2063 to 2073 are enriched in basic and acidic residues; it reads HVEHIKMERMP. Positions 2084–2120 are enriched in polar residues; the sequence is SKTQPPRSRSVSQTRKSPTNPNSGIGATGAGNRSNLL.

This sequence belongs to the protein kinase superfamily. Tyr protein kinase family. Insulin receptor subfamily. In terms of assembly, tetramer of 2 alpha and 2 beta chains linked by disulfide bonds. The alpha chains contribute to the formation of the ligand-binding domain, while the beta chains carry the kinase domain. Interacts (via C-terminal cytoplasmic region) with dock/dreadlocks (via SH2 and SH3 domains); when autophosphorylated. May interact (via beta subunit) with chico/IRS-1; this interaction may lead to tyrosine phosphorylation of the insulin receptor substrate chico. Interacts with Elp6; the interaction may stabilize Elp6. It depends on Mn(2+) as a cofactor. The 280 kDa proreceptor is proteolytically processed to form a 120 kDa alpha subunit and a 170 kDa beta subunit. The beta subunit undergoes cell-specific cleavage to generate a 90 kDa beta subunit and a free 60 kDa C-terminal subunit. Both the 90 kDa and the 170 kDa beta subunits can assemble with the alpha subunits to form mature receptors. Post-translationally, autophosphorylated on tyrosine residues, including Tyr-1549 and Tyr-1550, in response to exogenous insulin. Tyr-1549 and Tyr-1550 are dephosphorylated by Ptp61F recruited by the dock/dreadlocks adapter protein. In terms of processing, phosphorylation of Tyr-1354 is required for Chico-binding.

It localises to the membrane. Its subcellular location is the cell projection. It is found in the axon. The protein resides in the growth cone membrane. The enzyme catalyses L-tyrosyl-[protein] + ATP = O-phospho-L-tyrosyl-[protein] + ADP + H(+). Its activity is regulated as follows. Activated in response to insulin. Autophosphorylation activates the kinase activity. Its function is as follows. Has a ligand-stimulated tyrosine-protein kinase activity. Binds 3 insulin-like peptide ligands. Regulates cell number and cell size during development by regulating cell growth and survival, affecting body size and organ size, including ovaries and imaginal disks. Plays a role in life-span determination. May be involved in regulation of other neuroendocrine signaling pathways. Involved in the development of the embryonic nervous system. Functions upstream of dock/dreadlocks for photoreceptor (R cell) axon guidance and targeting in the visual system. Involved in the acs mediated recovery of gut enterocytes following the cytoplasmic purge response to intestinal bacterial infection. The polypeptide is Insulin-like receptor (Drosophila melanogaster (Fruit fly)).